Consider the following 195-residue polypeptide: Imidazoleglycerol-phosphate dehydratase (195 aa).

The protein belongs to the imidazoleglycerol-phosphate dehydratase family.

It is found in the cytoplasm. It catalyses the reaction D-erythro-1-(imidazol-4-yl)glycerol 3-phosphate = 3-(imidazol-4-yl)-2-oxopropyl phosphate + H2O. It participates in amino-acid biosynthesis; L-histidine biosynthesis; L-histidine from 5-phospho-alpha-D-ribose 1-diphosphate: step 6/9. This Acetivibrio thermocellus (strain ATCC 27405 / DSM 1237 / JCM 9322 / NBRC 103400 / NCIMB 10682 / NRRL B-4536 / VPI 7372) (Clostridium thermocellum) protein is Imidazoleglycerol-phosphate dehydratase.